The chain runs to 175 residues: Peptide deformylase (175 aa).

Cys-99 and His-141 together coordinate Fe cation. The active site involves Glu-142. His-145 contributes to the Fe cation binding site.

Belongs to the polypeptide deformylase family. Fe(2+) is required as a cofactor.

The catalysed reaction is N-terminal N-formyl-L-methionyl-[peptide] + H2O = N-terminal L-methionyl-[peptide] + formate. Removes the formyl group from the N-terminal Met of newly synthesized proteins. Requires at least a dipeptide for an efficient rate of reaction. N-terminal L-methionine is a prerequisite for activity but the enzyme has broad specificity at other positions. The polypeptide is Peptide deformylase (Rickettsia akari (strain Hartford)).